The chain runs to 311 residues: Formyltransferase/hydrolase complex subunit D (311 aa).

Belongs to the FTR family. In terms of assembly, homotetramer. Octaheteromer. Part of the formyltransferase/hydrolase complex fhc; composed of FhcA, FhcB, FhcC and FhcD.

Its subcellular location is the cytoplasm. The enzyme catalyses N-formylmethanofuran + 5,6,7,8-tetrahydromethanopterin + H(+) = N(5)-formyl-5,6,7,8-tetrahydromethanopterin + methanofuran. Its pathway is one-carbon metabolism; formaldehyde degradation; formate from formaldehyde (H(4)MPT route): step 4/5. Its function is as follows. Involved in the transformation of 5-formyl tetrahydromethanopterin (5-formyl-H(4)MPT) to methanofuran (MFR) and formate via the intermediate formylmethanofuran (formyl-MFR). Catalyzes the transfer of a formyl group from 5-formyl-H(4)MPT to MFR to produce tetrahydromethanopterin (H(4)MPT) and formyl-MFR, which is then hydrolyzed to formate and MFR. The sequence is that of Formyltransferase/hydrolase complex subunit D from Methylorubrum extorquens (strain ATCC 14718 / DSM 1338 / JCM 2805 / NCIMB 9133 / AM1) (Methylobacterium extorquens).